The sequence spans 199 residues: MIHDYHITHFLISVPAVYCLPNEKIGMEVAFVGYSNSGKSSAINALTYQKKLTKVSKTPGCTQLINLFEVSPGIRLIDFPGYGYAKKTKKRKNYWHDVICEYLKKRKNLKGLILMMDIRHPIKDLDQKTIESALSVDVPVFTLLSKSDKISRNILQVTSKKIIHDMKMMFETHIQVEPFSVVKKYGIHSLKRVLNNWLR.

The region spanning 25-199 (IGMEVAFVGY…LKRVLNNWLR (175 aa)) is the EngB-type G domain. Residues serine 40 and threonine 62 each coordinate Mg(2+).

Belongs to the TRAFAC class TrmE-Era-EngA-EngB-Septin-like GTPase superfamily. EngB GTPase family. It depends on Mg(2+) as a cofactor.

Necessary for normal cell division and for the maintenance of normal septation. This Blochmanniella pennsylvanica (strain BPEN) protein is Probable GTP-binding protein EngB.